A 528-amino-acid chain; its full sequence is DnaJ homolog 1, mitochondrial (528 aa).

The transit peptide at 1-66 (MFSKYLQSRV…REFSRCAALK (66 aa)) directs the protein to the mitochondrion. The 65-residue stretch at 86-150 (DPYKTLGVSK…KKKKAFDTYG (65 aa)) folds into the J domain. Residues 227–308 (GAKKDLSYSV…CMGSGTVRER (82 aa)) form a CR-type zinc finger. 4 CXXCXGXG motif repeats span residues 240–247 (CSSCHGSG), 257–264 (CFACKGTG), 280–287 (CDSCGGTG), and 296–303 (CRSCMGSG). The interval 455–528 (NDSTARRTQS…QNPKKDESSS (74 aa)) is disordered. A compositionally biased stretch (low complexity) spans 462–488 (TQSSPSGTNSSTSTSSTSSKHSTGIST). The segment covering 513-528 (LHPDEDQNPKKDESSS) has biased composition (basic and acidic residues).

The protein resides in the mitochondrion. The sequence is that of DnaJ homolog 1, mitochondrial (mdj1) from Schizosaccharomyces pombe (strain 972 / ATCC 24843) (Fission yeast).